We begin with the raw amino-acid sequence, 219 residues long: Large ribosomal subunit protein bL25 (219 aa).

Positions 176 to 219 (VTVVPPTDEPSEEEVEAMEGESATEEPEVVGEDKEDDEEENKED) are disordered. The segment covering 184–219 (EPSEEEVEAMEGESATEEPEVVGEDKEDDEEENKED) has biased composition (acidic residues).

This sequence belongs to the bacterial ribosomal protein bL25 family. CTC subfamily. As to quaternary structure, part of the 50S ribosomal subunit; part of the 5S rRNA/L5/L18/L25 subcomplex. Contacts the 5S rRNA. Binds to the 5S rRNA independently of L5 and L18.

This is one of the proteins that binds to the 5S RNA in the ribosome where it forms part of the central protuberance. This is Large ribosomal subunit protein bL25 from Staphylococcus epidermidis (strain ATCC 35984 / DSM 28319 / BCRC 17069 / CCUG 31568 / BM 3577 / RP62A).